A 145-amino-acid polypeptide reads, in one-letter code: Small ribosomal subunit protein bS6 (145 aa).

It belongs to the bacterial ribosomal protein bS6 family.

Functionally, binds together with bS18 to 16S ribosomal RNA. This is Small ribosomal subunit protein bS6 from Mycoplasmopsis agalactiae (strain NCTC 10123 / CIP 59.7 / PG2) (Mycoplasma agalactiae).